We begin with the raw amino-acid sequence, 258 residues long: tRNA pseudouridine synthase A (258 aa).

Asp54 (nucleophile) is an active-site residue. Tyr112 serves as a coordination point for substrate.

This sequence belongs to the tRNA pseudouridine synthase TruA family. Homodimer.

It catalyses the reaction uridine(38/39/40) in tRNA = pseudouridine(38/39/40) in tRNA. Its function is as follows. Formation of pseudouridine at positions 38, 39 and 40 in the anticodon stem and loop of transfer RNAs. The chain is tRNA pseudouridine synthase A from Geobacillus kaustophilus (strain HTA426).